A 289-amino-acid polypeptide reads, in one-letter code: Kinetochore-associated protein MTW1 (289 aa).

Positions 105 to 147 form a coiled coil; it reads RLENQKDLVIVDENELKKSEEKLREKVNDVELAFKKNEMLLKR.

Belongs to the mis12 family. Component of the MIND kinetochore complex, which is composed of at least MTW1, NNF1, NSL1 and DSN1.

It is found in the chromosome. Its subcellular location is the centromere. The protein localises to the kinetochore. It localises to the cytoplasm. The protein resides in the cytoskeleton. It is found in the spindle pole. Its function is as follows. Acts as an essential component of the kinetochore MIND complex, which is required for the spindle checkpoint and kinetochore integrity. MIND plays a role in establishing a bipolar spindle-kinetochore interaction by joining kinetochore subunits contacting DNA to those contacting microtubules. This is Kinetochore-associated protein MTW1 (MTW1) from Saccharomyces cerevisiae (strain ATCC 204508 / S288c) (Baker's yeast).